We begin with the raw amino-acid sequence, 106 residues long: Large ribosomal subunit protein uL24 (106 aa).

It belongs to the universal ribosomal protein uL24 family. As to quaternary structure, part of the 50S ribosomal subunit.

One of two assembly initiator proteins, it binds directly to the 5'-end of the 23S rRNA, where it nucleates assembly of the 50S subunit. In terms of biological role, one of the proteins that surrounds the polypeptide exit tunnel on the outside of the subunit. The polypeptide is Large ribosomal subunit protein uL24 (Thermosipho melanesiensis (strain DSM 12029 / CIP 104789 / BI429)).